Reading from the N-terminus, the 504-residue chain is Tachykinin-like peptides receptor 86C (504 aa).

Topologically, residues 1–84 (MSEIVDTELL…PYELPWEQKT (84 aa)) are extracellular. N-linked (GlcNAc...) asparagine glycosylation is found at asparagine 12, asparagine 28, and asparagine 36. The chain crosses the membrane as a helical span at residues 85–108 (IWAIIFGLMMFVAIAGNGIVLWIV). At 109–118 (TGHRSMRTVT) the chain is on the cytoplasmic side. A helical transmembrane segment spans residues 119–143 (NYFLLNLSIADLLMSSLNCVFNFIF). Topologically, residues 144-155 (MLNSDWPFGSIY) are extracellular. The chain crosses the membrane as a helical span at residues 156–179 (CTINNFVANVTVSTSVFTLVAISF). The Cytoplasmic segment spans residues 180 to 199 (DRYIAIVHPLKRRTSRRKVR). Residues 200–224 (IILVLIWALSCVLSAPCLLYSSIMT) traverse the membrane as a helical segment. The Extracellular portion of the chain corresponds to 225-250 (KHYYNGKSRTVCFMMWPDGRYPTSMA). Residues 251–275 (DYAYNLIILVLTYGIPMIVMLICYS) form a helical membrane-spanning segment. The Cytoplasmic segment spans residues 276 to 308 (LMGRVLWGSRSIGENTDRQMESMKSKRKVVRMF). Residues 309–330 (IAIVSIFAICWLPYHLFFIYAY) form a helical membrane-spanning segment. Over 331–343 (HNNQVASTKYVQH) the chain is Extracellular. Residues 344–367 (MYLGFYWLAMSNAMVNPLIYYWMN) form a helical membrane-spanning segment. Over 368 to 504 (KRFRMYFQRI…NPVELSPKQM (137 aa)) the chain is Cytoplasmic. Residues 393–450 (PKSRLTNKNSSNRHTRAETKSQWKRSTMETQIQQAPVTSSCREQRSAQQQQPPGSGTN) form a disordered region. Composition is skewed to polar residues over residues 395–404 (SRLTNKNSSN) and 416–450 (KRST…SGTN).

This sequence belongs to the G-protein coupled receptor 1 family. In terms of tissue distribution, expressed in central nervous system, as well as in subsets of neurons in each segment of the developing ventral ganglia.

The protein resides in the cell membrane. Functionally, receptor for tachykinin-like peptides. This is Tachykinin-like peptides receptor 86C (TkR86C) from Drosophila melanogaster (Fruit fly).